The chain runs to 108 residues: Ig kappa chain V region GOM (108 aa).

Residues D1 to C23 form a framework-1 region. C23 and C88 form a disulfide bridge. The complementarity-determining-1 stretch occupies residues R24–N34. The framework-2 stretch occupies residues W35–E49. Residues P44–G66 form a disordered region. The segment at Q50 to S56 is complementarity-determining-2. Residues G57–C88 are framework-3. A complementarity-determining-3 region spans residues M89–T97. Positions F98–R107 are framework-4.

The protein is Ig kappa chain V region GOM of Canis lupus familiaris (Dog).